The chain runs to 697 residues: Sialidase B (697 aa).

The first 29 residues, 1–29 (MNKRGLYSKLGISVVGISLLMGVPTLIHA), serve as a signal peptide directing secretion. Arginine 245 contacts substrate. The active-site Proton acceptor is the aspartate 270. 3 BNR repeats span residues 280–291 (SYSDDNGKTWSE), 462–473 (TTSQNRGESWEQ), and 517–528 (LISDDSGQTWKK). Glutamate 541 is an active-site residue. Arginine 557 lines the substrate pocket. The BNR 4 repeat unit spans residues 566–577 (MTSRDSGETWSK). Arginine 619 lines the substrate pocket. Residue tyrosine 653 is the Nucleophile of the active site.

This sequence belongs to the glycosyl hydrolase 33 family.

The enzyme catalyses Hydrolysis of alpha-(2-&gt;3)-, alpha-(2-&gt;6)-, alpha-(2-&gt;8)- glycosidic linkages of terminal sialic acid residues in oligosaccharides, glycoproteins, glycolipids, colominic acid and synthetic substrates.. This chain is Sialidase B (nanB), found in Streptococcus pneumoniae serotype 4 (strain ATCC BAA-334 / TIGR4).